A 451-amino-acid chain; its full sequence is Trigger factor (451 aa).

The 86-residue stretch at 165–250 (DDKLTIDFEG…LHQIQAREAL (86 aa)) folds into the PPIase FKBP-type domain.

It belongs to the FKBP-type PPIase family. Tig subfamily.

The protein localises to the cytoplasm. The enzyme catalyses [protein]-peptidylproline (omega=180) = [protein]-peptidylproline (omega=0). In terms of biological role, involved in protein export. Acts as a chaperone by maintaining the newly synthesized protein in an open conformation. Functions as a peptidyl-prolyl cis-trans isomerase. The chain is Trigger factor from Helicobacter pylori (strain HPAG1).